The primary structure comprises 454 residues: Nuclear envelope integral membrane protein (454 aa).

Residues 1 to 18 (MHSAGLLMLTVAGYFTSG) form the signal peptide. N38 carries N-linked (GlcNAc...) asparagine glycosylation. The next 5 helical transmembrane spans lie at 138 to 158 (IPLD…LFSA), 166 to 186 (VFYY…VVIY), 197 to 217 (MMYG…KQLA), 231 to 251 (VLGY…RIGP), and 280 to 300 (TSAV…PISW). Residues 388-405 (SMDAAPEEESVEEPEEDK) are compositionally biased toward acidic residues. Residues 388-454 (SMDAAPEEES…QEVDLRQVVQ (67 aa)) are disordered. Positions 414 to 424 (NSQFRYQQAAR) are enriched in polar residues. Residues 428–446 (PEPESESDDSEEEEFFEQE) show a composition bias toward acidic residues.

This sequence belongs to the NEMP family. In terms of assembly, interacts with OTE. In terms of tissue distribution, expressed in both germline and somatic cells in the larval testis and prepupal ovary (at protein level). Also detected in the larval eye and larval wing disk (at protein level).

It is found in the nucleus inner membrane. Functionally, contributes to nuclear envelope stiffness in germ cells. Required for male and female fertility. The chain is Nuclear envelope integral membrane protein from Drosophila melanogaster (Fruit fly).